The following is a 45-amino-acid chain: Bomanin Short 2 (45 aa).

Positions Met-1–Ala-20 are cleaved as a signal peptide. Residues Val-21–Pro-27 constitute a propeptide, removed by a dipeptidylpeptidase. A disulfide bond links Cys-36 and Cys-39. Gly-43 is subject to Glycine amide.

Hemolymph (at protein level).

It localises to the secreted. In terms of biological role, secreted immune-induced peptide induced by Toll signaling. Has a role in resistance to bacterial and fungal infections. The chain is Bomanin Short 2 from Drosophila melanogaster (Fruit fly).